We begin with the raw amino-acid sequence, 901 residues long: Flowering time control protein FPA (901 aa).

RRM domains are found at residues 18–90, 95–166, and 206–281; these read NNLW…YARP, KSLW…FLRS, and KVLW…YSND. The tract at residues 343–416 is disordered; the sequence is VGKEPNWRRP…SVDGFTPMGV (74 aa). The SPOC domain occupies 441–537; sequence WRGMIAKGGT…DDGTTLFLVP (97 aa). The segment at 655-736 is disordered; it reads SQPAAPESHQ…YPPASNNPNY (82 aa). Composition is skewed to polar residues over residues 664–682 and 700–716; these read QPMSGPSTVVSTAHQSNGL and HDASNQSFQQYGNQYTP.

It belongs to the RRM Spen family. As to expression, expressed in roots, leaves, stems and flowers. Highest expression in flower stems and meristematic regions.

The protein localises to the nucleus. Its function is as follows. Plays a role in the regulation of flowering time in the autonomous flowering pathway by decreasing FLOWERING LOCUS C mRNA levels. Required for RNA-mediated chromatin silencing of a range of loci in the genome. Cotranscriptionally recognizes aberrant RNA and marks it for silencing. Controls alternative cleavage and polyadenylation on pre-mRNAs and antisense RNAs. Acts redundantly with FCA to prevent the expression of distally polyadenylated antisense RNAs at the FLC locus. This Arabidopsis thaliana (Mouse-ear cress) protein is Flowering time control protein FPA (FPA).